The following is a 156-amino-acid chain: ATP synthase subunit b', organellar chromatophore (156 aa).

The helical transmembrane segment at 23–43 threads the bilayer; it reads TLPLMAIQVVFLTFILNAIFF.

The protein belongs to the ATPase B chain family. F-type ATPases have 2 components, F(1) - the catalytic core - and F(0) - the membrane proton channel. F(1) has five subunits: alpha(3), beta(3), gamma(1), delta(1), epsilon(1). F(0) has four main subunits: a(1), b(1), b'(1) and c(10-14). The alpha and beta chains form an alternating ring which encloses part of the gamma chain. F(1) is attached to F(0) by a central stalk formed by the gamma and epsilon chains, while a peripheral stalk is formed by the delta, b and b' chains.

Its subcellular location is the plastid. It is found in the organellar chromatophore thylakoid membrane. Functionally, f(1)F(0) ATP synthase produces ATP from ADP in the presence of a proton or sodium gradient. F-type ATPases consist of two structural domains, F(1) containing the extramembraneous catalytic core and F(0) containing the membrane proton channel, linked together by a central stalk and a peripheral stalk. During catalysis, ATP synthesis in the catalytic domain of F(1) is coupled via a rotary mechanism of the central stalk subunits to proton translocation. Component of the F(0) channel, it forms part of the peripheral stalk, linking F(1) to F(0). The b'-subunit is a diverged and duplicated form of b found in plants and photosynthetic bacteria. The polypeptide is ATP synthase subunit b', organellar chromatophore (Paulinella chromatophora).